The primary structure comprises 788 residues: Ribonucleoside-diphosphate reductase large subunit (788 aa).

In terms of domain architecture, ATP-cone spans 7-98; it reads TYVVKRDGRK…VSNLHKKTNK (92 aa). ATP-binding positions include 11–12, 17–23, Thr59, and Asp63; these read KR and EDVHFDK. GDP is bound by residues Ser208 and Ser223. Residues Cys224 and Cys450 are joined by a disulfide bond. Residues 232–234, Lys249, Arg262, and 269–270 contribute to the dTTP site; these read DSI and AG. A GDP-binding site is contributed by Asn433. The Proton acceptor role is filled by Asn433. Cys435 acts as the Cysteine radical intermediate in catalysis. Residues Glu437 and 610–613 each bind GDP; that span reads TAST. Residue Glu437 is the Proton acceptor of the active site.

It belongs to the ribonucleoside diphosphate reductase large chain family. As to quaternary structure, heterodimer of a large and a small subunit.

It catalyses the reaction a 2'-deoxyribonucleoside 5'-diphosphate + [thioredoxin]-disulfide + H2O = a ribonucleoside 5'-diphosphate + [thioredoxin]-dithiol. Under complex allosteric control mediated by deoxynucleoside triphosphates and ATP binding to separate specificity and activation sites on the large subunit. The type of nucleotide bound at the specificity site determines substrate preference. It seems probable that ATP makes the enzyme reduce CDP and UDP, dGTP favors ADP reduction and dTTP favors GDP reduction. Stimulated by ATP and inhibited by dATP binding to the activity site. Functionally, provides the precursors necessary for DNA synthesis. Catalyzes the biosynthesis of deoxyribonucleotides from the corresponding ribonucleotides. The sequence is that of Ribonucleoside-diphosphate reductase large subunit (rnr-1) from Caenorhabditis elegans.